We begin with the raw amino-acid sequence, 531 residues long: UDP-glucuronosyltransferase 1A6 (531 aa).

An N-terminal signal peptide occupies residues 1–26; sequence MACLLSAAQRASAGVLFVALWGTVLG. N294 carries N-linked (GlcNAc...) asparagine glycosylation. Residues 489–505 traverse the membrane as a helical segment; that stretch reads VIGFLLAIVLTVAFVTF.

This sequence belongs to the UDP-glycosyltransferase family.

The protein localises to the microsome. It localises to the endoplasmic reticulum membrane. It carries out the reaction glucuronate acceptor + UDP-alpha-D-glucuronate = acceptor beta-D-glucuronoside + UDP + H(+). The catalysed reaction is (5Z,8Z,11Z,14Z)-eicosatetraenoate + UDP-alpha-D-glucuronate = O-[(5Z),(8Z),(11Z),(14Z)-eicosatetraenoyl]-beta-D-glucuronate + UDP. The enzyme catalyses 15-hydroxy-(5Z,8Z,11Z,13E)-eicosatetraenoate + UDP-alpha-D-glucuronate = 15-O-(beta-D-glucuronosyl)-(5Z,8Z,11Z,14Z)-eicosatetraenoate + UDP + H(+). It catalyses the reaction (E)-ferulate + UDP-alpha-D-glucuronate = (E)-4-O-(beta-D-glucuronosyl)-ferulate + UDP + H(+). It carries out the reaction (E)-ferulate + UDP-alpha-D-glucuronate = (E)-ferulic acid beta-D-glucuronate ester + UDP. Functionally, UDP-glucuronosyltransferase (UGT) that catalyzes phase II biotransformation reactions in which lipophilic substrates are conjugated with glucuronic acid to facilitate their inactivation and excretion from the body. Essential for the elimination and detoxification of drugs, xenobiotics and endogenous compounds. Involved in the glucuronidation of arachidonic acid (AA) and AA-derived eicosanoids including 15-HETE and 20-HETE. Conjugates small planar phenolic molecules such as 4-nitrophenol, 1-naphthol, and 4-methylumbelliferone. The bulky phenol 4-hydroxybiphenyl, androgens and estrogens are not substrates. 2-hydroxybiphenyl is an excellent substrate. Involved in the glucuronidation of the phytochemical ferulic acid at the phenolic or the carboxylic acid group. This Oryctolagus cuniculus (Rabbit) protein is UDP-glucuronosyltransferase 1A6 (UGT1).